The sequence spans 146 residues: Hemoglobin subunit beta (146 aa).

The 145-residue stretch at 2-146 (HWSAEEKQLI…VAHALARKYH (145 aa)) folds into the Globin domain. Heme b contacts are provided by His63 and His92.

Belongs to the globin family. As to quaternary structure, heterotetramer of two alpha chains and two beta chains. In terms of tissue distribution, red blood cells.

Functionally, involved in oxygen transport from the lung to the various peripheral tissues. The sequence is that of Hemoglobin subunit beta (HBB) from Phoenicopterus ruber (American flamingo).